The chain runs to 166 residues: Putative lipoprotein Lxx21020 (166 aa).

The signal sequence occupies residues M1–G22. The N-palmitoyl cysteine moiety is linked to residue C23. C23 carries the S-diacylglycerol cysteine lipid modification.

It is found in the cell membrane. The protein is Putative lipoprotein Lxx21020 of Leifsonia xyli subsp. xyli (strain CTCB07).